Here is a 320-residue protein sequence, read N- to C-terminus: tRNA U34 carboxymethyltransferase (320 aa).

Carboxy-S-adenosyl-L-methionine contacts are provided by residues Lys-89, Trp-103, Lys-108, Gly-127, 177–178 (LE), Met-193, Tyr-197, and Arg-312.

This sequence belongs to the class I-like SAM-binding methyltransferase superfamily. CmoB family. As to quaternary structure, homotetramer.

It carries out the reaction carboxy-S-adenosyl-L-methionine + 5-hydroxyuridine(34) in tRNA = 5-carboxymethoxyuridine(34) in tRNA + S-adenosyl-L-homocysteine + H(+). In terms of biological role, catalyzes carboxymethyl transfer from carboxy-S-adenosyl-L-methionine (Cx-SAM) to 5-hydroxyuridine (ho5U) to form 5-carboxymethoxyuridine (cmo5U) at position 34 in tRNAs. The sequence is that of tRNA U34 carboxymethyltransferase from Stutzerimonas stutzeri (strain A1501) (Pseudomonas stutzeri).